The primary structure comprises 76 residues: Large ribosomal subunit protein bL28 (76 aa).

The segment at 21–42 is disordered; it reads RGKAKKEGGVGKHITKTSRRRQ. Residues 33-42 show a composition bias toward basic residues; it reads HITKTSRRRQ.

This sequence belongs to the bacterial ribosomal protein bL28 family.

The chain is Large ribosomal subunit protein bL28 from Halothermothrix orenii (strain H 168 / OCM 544 / DSM 9562).